The primary structure comprises 216 residues: FMN-dependent NADH:quinone oxidoreductase 2 (216 aa).

Residues Ser-9, Ser-15–Ser-17, Met-96–Phe-99, and Ser-140–Gly-143 contribute to the FMN site.

It belongs to the azoreductase type 1 family. Homodimer. It depends on FMN as a cofactor.

It catalyses the reaction 2 a quinone + NADH + H(+) = 2 a 1,4-benzosemiquinone + NAD(+). The enzyme catalyses N,N-dimethyl-1,4-phenylenediamine + anthranilate + 2 NAD(+) = 2-(4-dimethylaminophenyl)diazenylbenzoate + 2 NADH + 2 H(+). Functionally, quinone reductase that provides resistance to thiol-specific stress caused by electrophilic quinones. Also exhibits azoreductase activity. Catalyzes the reductive cleavage of the azo bond in aromatic azo compounds to the corresponding amines. In Xanthomonas axonopodis pv. citri (strain 306), this protein is FMN-dependent NADH:quinone oxidoreductase 2.